The primary structure comprises 90 residues: Lectin-1 (90 aa).

Q1 is subject to Pyrrolidone carboxylic acid. C46 and C71 form a disulfide bridge.

In terms of processing, the N-terminus is blocked. Post-translationally, contains seven disulfide bonds. Proteolytically cleaved. Major mature form may consist of cleaved, disulfide-bonded N-terminal and C-terminal chains.

Its function is as follows. Lectin with specificity for complex N-linked glycans and O-linked glycans. Has hemagglutinating activity towards rabbit erythrocytes. The polypeptide is Lectin-1 (Hypnea musciformis (Red alga)).